Here is a 577-residue protein sequence, read N- to C-terminus: Beta-fructofuranosidase, insoluble isoenzyme 1 (577 aa).

An N-terminal signal peptide occupies residues 1-22; it reads MGTRLLALAPWLLLLLLQLAGA. Residue Asp63 is part of the active site. 3 N-linked (GlcNAc...) asparagine glycosylation sites follow: Asn158, Asn183, and Asn333.

The protein belongs to the glycosyl hydrolase 32 family. In terms of tissue distribution, expressed in roots, leaves and flowers. Weakly expressed in seeds.

Its subcellular location is the secreted. It localises to the extracellular space. The protein resides in the apoplast. The protein localises to the cell wall. The enzyme catalyses Hydrolysis of terminal non-reducing beta-D-fructofuranoside residues in beta-D-fructofuranosides.. Functionally, may play a role in sucrose partitioning during seed development and in stress response. The protein is Beta-fructofuranosidase, insoluble isoenzyme 1 (CIN1) of Oryza sativa subsp. japonica (Rice).